Here is an 810-residue protein sequence, read N- to C-terminus: Probable dehydratase YbiW (810 aa).

The PFL domain maps to 11-682 (DRIKAHKNAL…QTMATPDGRK (672 aa)). The segment at 677–699 (TPDGRKAHTPLAEGASPASGTDH) is disordered. Residues 689 to 810 (EGASPASGTD…DIIARTEHML (122 aa)) enclose the Glycine radical domain. Position 786 is a glycine radical (G786).

The protein belongs to the glycyl radical enzyme (GRE) family.

Probably shows dehydratase activity. The chain is Probable dehydratase YbiW (ybiW) from Escherichia coli (strain K12).